The following is a 382-amino-acid chain: MPSGCRCLNLVCLLCILGATSQPARADDCSSHCDLAHGCCAPDGSCRCDPGWEGLHCERCVRMPGCQHGTCHQPWQCICHSGWAGKFCDKDEHICTSQSPCQNGGQCVYDGGGEYHCVCLPGFRGRGCERKAGPCEQAGFPCQNGGQCQDNQGFALNFTCRCLAGFMGAHCEVNVDDCLMRPCANGATCIDGINRFSCLCPEGFAGRFCTINLDDCASRPCQRGARCRDRVHDFDCLCPSGYGGKTCELVLPAPDPATIGTPQAPASAVVVPATGSAPHSAGAGLLRISVKEVVRRQEAGLGESSLVALVVFGSLTAALVLATVLLTLRAWRRGICPTGPCCDPAPHYAPARQDQECQVSMLPAGFPLSPDLPPEPGKTTAL.

Residues Met-1–Ala-26 form the signal peptide. 4 EGF-like domains span residues Asp-27–Glu-58, Arg-62–Asp-89, Asp-91–Glu-129, and Lys-131–Glu-172. At Asp-27–Ser-305 the chain is on the extracellular side. Disulfide bonds link Cys-29–Cys-40, Cys-33–Cys-46, Cys-48–Cys-57, Cys-66–Cys-71, Cys-79–Cys-88, Cys-95–Cys-107, Cys-101–Cys-117, Cys-119–Cys-128, Cys-135–Cys-148, Cys-142–Cys-160, Cys-162–Cys-171, Cys-178–Cys-189, Cys-183–Cys-198, Cys-200–Cys-209, Cys-216–Cys-227, Cys-221–Cys-236, and Cys-238–Cys-247. The N-linked (GlcNAc...) asparagine glycan is linked to Asn-157. An EGF-like 5; calcium-binding domain is found at Asn-174–Thr-210. The EGF-like 6; calcium-binding domain occupies Asn-212 to Glu-248. A helical transmembrane segment spans residues Leu-306–Leu-326. Residues Thr-327–Leu-382 lie on the Cytoplasmic side of the membrane.

It is found in the membrane. Regulates adipogenesis. The polypeptide is Protein delta homolog 2 (Dlk2) (Rattus norvegicus (Rat)).